A 250-amino-acid chain; its full sequence is Hydroxyacylglutathione hydrolase (250 aa).

Positions 52, 54, 56, 57, 107, 128, and 166 each coordinate Zn(2+).

Belongs to the metallo-beta-lactamase superfamily. Glyoxalase II family. In terms of assembly, monomer. Requires Zn(2+) as cofactor.

The enzyme catalyses an S-(2-hydroxyacyl)glutathione + H2O = a 2-hydroxy carboxylate + glutathione + H(+). Its pathway is secondary metabolite metabolism; methylglyoxal degradation; (R)-lactate from methylglyoxal: step 2/2. Thiolesterase that catalyzes the hydrolysis of S-D-lactoyl-glutathione to form glutathione and D-lactic acid. The sequence is that of Hydroxyacylglutathione hydrolase from Neisseria meningitidis serogroup A / serotype 4A (strain DSM 15465 / Z2491).